A 715-amino-acid polypeptide reads, in one-letter code: Fatty acid oxidation complex subunit alpha (715 aa).

The interval Met1 to Pro190 is enoyl-CoA hydratase. A 3-hydroxyacyl-CoA dehydrogenase region spans residues Gly306 to Gly714.

The protein in the N-terminal section; belongs to the enoyl-CoA hydratase/isomerase family. This sequence in the central section; belongs to the 3-hydroxyacyl-CoA dehydrogenase family. Heterotetramer of two alpha chains (FadJ) and two beta chains (FadI).

Its subcellular location is the cytoplasm. The catalysed reaction is a (3S)-3-hydroxyacyl-CoA = a (2E)-enoyl-CoA + H2O. The enzyme catalyses a 4-saturated-(3S)-3-hydroxyacyl-CoA = a (3E)-enoyl-CoA + H2O. It carries out the reaction a (3S)-3-hydroxyacyl-CoA + NAD(+) = a 3-oxoacyl-CoA + NADH + H(+). It catalyses the reaction (3S)-3-hydroxybutanoyl-CoA = (3R)-3-hydroxybutanoyl-CoA. It participates in lipid metabolism; fatty acid beta-oxidation. In terms of biological role, catalyzes the formation of a hydroxyacyl-CoA by addition of water on enoyl-CoA. Also exhibits 3-hydroxyacyl-CoA epimerase and 3-hydroxyacyl-CoA dehydrogenase activities. This is Fatty acid oxidation complex subunit alpha from Salmonella typhimurium (strain LT2 / SGSC1412 / ATCC 700720).